The following is a 377-amino-acid chain: Copper-containing nitrite reductase (377 aa).

Residues 1–35 (MTNTLQMTRRTMLTGAAVAGALTPILTSGGGNASP) constitute a signal peptide (tat-type signal). Plastocyanin-like domains lie at 99 to 194 (MTFD…IMVL) and 259 to 360 (GAVG…FKVT). The Cu cation site is built by H132, H137, H172, C173, H182, M187, and H343.

This sequence belongs to the multicopper oxidase family. As to quaternary structure, homotrimer. Requires Cu(2+) as cofactor. It depends on Cu(+) as a cofactor. The cofactor is FAD. Predicted to be exported by the Tat system. The position of the signal peptide cleavage has not been experimentally proven.

It is found in the periplasm. The catalysed reaction is nitric oxide + Fe(III)-[cytochrome c] + H2O = Fe(II)-[cytochrome c] + nitrite + 2 H(+). It participates in nitrogen metabolism; nitrate reduction (denitrification); dinitrogen from nitrate: step 2/4. The polypeptide is Copper-containing nitrite reductase (nirK) (Rhizobium sullae (Rhizobium hedysari)).